The primary structure comprises 697 residues: Phosphatase and actin regulator 4-B (697 aa).

The stretch at 42 to 67 (EVLERKISMRKPREELVKRGLIVDVP) is one RPEL 1 repeat. Disordered regions lie at residues 63 to 381 (IVDV…LTLA) and 450 to 569 (LKVP…SKDE). The span at 189–202 (HVPEKTSEKYRPKS) shows a compositional bias: basic and acidic residues. 2 stretches are compositionally biased toward pro residues: residues 317-326 (PSPPLPPKRA) and 370-380 (APNPPVPPLTL). Acidic residues-rich tracts occupy residues 454-469 (DDDD…DESL), 501-514 (QEED…DTDS), and 522-532 (EEDEDEEEEET). RPEL repeat units follow at residues 579 to 604 (TQLN…QKNE) and 616 to 641 (RRLT…RFNE).

It belongs to the phosphatase and actin regulator family. In terms of assembly, binds ppp1ca and actin.

Its subcellular location is the cytoplasm. The protein resides in the cell projection. The protein localises to the lamellipodium. Its function is as follows. Regulator of protein phosphatase 1 (PP1) required for neural tube and optic fissure closure, and enteric neural crest cell (ENCCs) migration during development. Acts as an activator of PP1. During neural tube closure, localizes to the ventral neural tube and activates PP1, leading to down-regulate cell proliferation within cranial neural tissue and the neural retina. Also acts as a regulator of migration of enteric neural crest cells (ENCCs) by activating PP1, leading to repression of the integrin signaling through the rho/rock pathway. The sequence is that of Phosphatase and actin regulator 4-B (phactr4-b) from Xenopus laevis (African clawed frog).